Consider the following 154-residue polypeptide: Large ribosomal subunit protein uL22c (154 aa).

The protein belongs to the universal ribosomal protein uL22 family. Part of the 50S ribosomal subunit.

It localises to the plastid. The protein localises to the chloroplast. Functionally, this protein binds specifically to 23S rRNA. Its function is as follows. The globular domain of the protein is located near the polypeptide exit tunnel on the outside of the subunit, while an extended beta-hairpin is found that lines the wall of the exit tunnel in the center of the 70S ribosome. This is Large ribosomal subunit protein uL22c (rpl22) from Jasminum nudiflorum (Winter jasmine).